Reading from the N-terminus, the 430-residue chain is Asparagine--tRNA ligase (430 aa).

Belongs to the class-II aminoacyl-tRNA synthetase family. In terms of assembly, homodimer.

The protein localises to the cytoplasm. It carries out the reaction tRNA(Asn) + L-asparagine + ATP = L-asparaginyl-tRNA(Asn) + AMP + diphosphate + H(+). The sequence is that of Asparagine--tRNA ligase from Bacillus velezensis (strain DSM 23117 / BGSC 10A6 / LMG 26770 / FZB42) (Bacillus amyloliquefaciens subsp. plantarum).